We begin with the raw amino-acid sequence, 162 residues long: uncharacterized protein (162 aa).

It belongs to the M.jannaschii MJ0150/MJ0739/MJ0745/MJ1460/MJ1642 family.

This is an uncharacterized protein from Methanocaldococcus jannaschii (strain ATCC 43067 / DSM 2661 / JAL-1 / JCM 10045 / NBRC 100440) (Methanococcus jannaschii).